Consider the following 321-residue polypeptide: MATH domain and coiled-coil domain-containing protein At3g58260 (321 aa).

The MATH domain occupies 6–135; that stretch reads NNTFTWVIKN…NDEVMVAVAV (130 aa). Positions 232-283 form a coiled coil; that stretch reads KLDWLEKKLDELFEKKKEEADKIRMQNIEEELKDLRQKCSSLEALLKKEKTG.

The polypeptide is MATH domain and coiled-coil domain-containing protein At3g58260 (Arabidopsis thaliana (Mouse-ear cress)).